The sequence spans 194 residues: Mitochondrial import inner membrane translocase subunit Tim22 (194 aa).

Cystine bridges form between C69–C141 and C160–C179. 3 helical membrane-spanning segments follow: residues A74–I94, M123–V143, and A170–D190.

It belongs to the Tim17/Tim22/Tim23 family. Component of the TIM22 complex, whose core is composed of TIMM22, associated with peripheral protein FXC1/TIMM10B and the 70 kDa heterohexamer. In most cases, the 70 kDa complex is composed of TIMM9 and TIMM10 (TIMM10A or TIMM10B). A small fraction of the 70 kDa complex is composed of TIMM8 (TIMM8A/DDP1 or TIMM8B/DDP2) and TIMM13. The TIM22 complex also contains AGK and TIMM29. Interacts directly with TIMM9, TIMM10A and FXC1/TIMM10B. Interacts (when oxidized) with TIMM29; interaction is direct. Post-translationally, disulfide bonds promote efficient assembly of the TIM22 complex.

It is found in the mitochondrion inner membrane. Its function is as follows. Essential core component of the TIM22 complex, a complex that mediates the import and insertion of multi-pass transmembrane proteins into the mitochondrial inner membrane. In the TIM22 complex, it constitutes the voltage-activated and signal-gated channel. Forms a twin-pore translocase that uses the membrane potential as external driving force in 2 voltage-dependent steps. In Bos taurus (Bovine), this protein is Mitochondrial import inner membrane translocase subunit Tim22 (TIMM22).